A 601-amino-acid chain; its full sequence is Proteasome-associated ATPase (601 aa).

Residues 1–15 show a composition bias toward gly residues; sequence MSGPRSGSGSGGSTG. Residues 1-31 form a disordered region; that stretch reads MSGPRSGSGSGGSTGRPGDAESRRSAYEKEA. Residues 18-31 show a composition bias toward basic and acidic residues; sequence GDAESRRSAYEKEA. Residues 18 to 106 adopt a coiled-coil conformation; that stretch reads GDAESRRSAY…LKEEVDRLAQ (89 aa). 289–294 lines the ATP pocket; sequence GCGKTL. The interval 600–601 is docks into pockets in the proteasome alpha-ring; that stretch reads YL.

It belongs to the AAA ATPase family. Homohexamer. Assembles into a hexameric ring structure that caps the 20S proteasome core. Strongly interacts with the prokaryotic ubiquitin-like protein Pup through a hydrophobic interface; the interacting region of ARC lies in its N-terminal coiled-coil domain. There is one Pup binding site per ARC hexamer ring. Upon ATP-binding, the C-terminus of ARC interacts with the alpha-rings of the proteasome core, possibly by binding to the intersubunit pockets.

Its pathway is protein degradation; proteasomal Pup-dependent pathway. Functionally, ATPase which is responsible for recognizing, binding, unfolding and translocation of pupylated proteins into the bacterial 20S proteasome core particle. May be essential for opening the gate of the 20S proteasome via an interaction with its C-terminus, thereby allowing substrate entry and access to the site of proteolysis. Thus, the C-termini of the proteasomal ATPase may function like a 'key in a lock' to induce gate opening and therefore regulate proteolysis. In Frankia alni (strain DSM 45986 / CECT 9034 / ACN14a), this protein is Proteasome-associated ATPase.